The following is a 1179-amino-acid chain: Calcium-activated potassium channel subunit alpha-1 (1179 aa).

A compositionally biased stretch (gly residues) spans 1-24; sequence MANGGGGGGGSSGGGGGGGGGGSG. A disordered region spans residues 1–62; it reads MANGGGGGGG…SSSSSSSSSV (62 aa). Residues 1–87 are Extracellular-facing; sequence MANGGGGGGG…VPCDSRGQRM (87 aa). The segment covering 41-61 has biased composition (low complexity); the sequence is SSSSSSSSSSSSSSSSSSSSS. Residues 88–108 form a helical membrane-spanning segment; it reads WWAFLASSMVTFFGGLFIILL. The Cytoplasmic portion of the chain corresponds to 109–179; it reads WRTLKYLWTV…MISAQTLTGR (71 aa). S-palmitoyl cysteine attachment occurs at residues Cys-119, Cys-120, and Cys-122. The helical transmembrane segment at 180–200 threads the bilayer; it reads VLVVLVFALSIGALVIYFIDS. At 201-215 the chain is on the extracellular side; that stretch reads SNPIESCQNFYKDFT. Residues 216–236 form a helical membrane-spanning segment; the sequence is LQIDMAFNVFFLLYFGLRFIA. Residues 237 to 240 are Cytoplasmic-facing; the sequence is ANDK. A helical transmembrane segment spans residues 241–261; it reads LWFWLEVNSVVDFFTVPPVFV. The Extracellular portion of the chain corresponds to 262 to 265; the sequence is SVYL. Residues 266–286 traverse the membrane as a helical; Voltage-sensor segment; it reads NRSWLGLRFLRALRLIQFSEI. Residues 287-301 lie on the Cytoplasmic side of the membrane; the sequence is LQFLNILKTSNSIKL. The chain crosses the membrane as a helical span at residues 302–322; the sequence is VNLLSIFISTWLTAAGFIHLV. Topologically, residues 323 to 336 are extracellular; the sequence is ENSGDPWENFQNNQ. The segment at residues 337-359 is an intramembrane region (pore-forming); sequence ALTYWECVYLLMVTMSTVGYGDV. The Selectivity for potassium signature appears at 353–356; sequence TVGY. Residues 360-368 lie on the Extracellular side of the membrane; that stretch reads YAKTTLGRL. A helical membrane pass occupies residues 369 to 389; that stretch reads FMVFFILGGLAMFASYVPEII. The Cytoplasmic segment spans residues 390-1179; that stretch reads ELIGNRKKYG…KQKYVQEERL (790 aa). One can recognise an RCK N-terminal 1 domain in the interval 408 to 550; the sequence is RKHIVVCGHI…WNWKEGDDAI (143 aa). The Mg(2+) site is built by Glu-440, Gln-463, and Glu-465. Residues 557 to 577 form a segment S7 region; sequence LGFIAQSCLAQGLSTMLANLF. The interval 614-634 is segment S8; it reads LSFPTVCELCFVKLKLLMIAI. Residues 678-682 are heme-binding motif; that stretch reads CKACH. The tract at residues 702–730 is disordered; that stretch reads EQPSTLSPKKKQRNGGMRNSPNSSPKLMR. Position 706 is a phosphothreonine (Thr-706). A phosphoserine mark is found at Ser-708, Ser-721, and Ser-725. Positions 780-800 are segment S9; that stretch reads VLSGHVVVCIFGDVSSALIGL. In terms of domain architecture, RCK N-terminal 2 spans 782–926; that stretch reads SGHVVVCIFG…MDRSSPDNSP (145 aa). Thr-913 is subject to Phosphothreonine. Phosphoserine occurs at positions 921 and 925. The short motif at 946–968 is the Calcium bowl element; sequence TELVNDTNVQFLDQDDDDDPDTE. Ca(2+) is bound by residues Gln-955, Asp-958, Asp-961, and Asp-963. A segment S10 region spans residues 975–995; sequence FACGTAFAVSVLDSLMSATYF. A compositionally biased stretch (low complexity) spans 1129–1154; sequence RASLSHSSHSSQSSSKKSSSVHSIPS. The interval 1129–1179 is disordered; that stretch reads RASLSHSSHSSQSSSKKSSSVHSIPSTANRQNRPKSRESRDKQKYVQEERL. Basic and acidic residues predominate over residues 1163 to 1179; the sequence is KSRESRDKQKYVQEERL. A phosphoserine mark is found at Ser-1164 and Ser-1167.

The protein belongs to the potassium channel family. Calcium-activated (TC 1.A.1.3) subfamily. KCa1.1/KCNMA1 sub-subfamily. As to quaternary structure, homotetramer; which constitutes the calcium-activated potassium channel. Interacts with beta subunits KCNMB1, KCNMB2, KCNMB3 and KCNMB4. Interacts with gamma subunits LRRC26, LRRC38, LRRC52 and LRRC55. Beta and gamma subunits are accessory, and modulate its activity. Interacts with RAB11B. Phosphorylated. Phosphorylation by kinases such as PKA and/or PKG. In smooth muscles, phosphorylation affects its activity. Post-translationally, palmitoylation by ZDHHC22 and ZDHHC23 within the intracellular linker between the S0 and S1 transmembrane domains regulates localization to the plasma membrane. Depalmitoylated by LYPLA1 and LYPLAL1, leading to retard exit from the trans-Golgi network.

The protein localises to the cell membrane. Its subcellular location is the endoplasmic reticulum membrane. It catalyses the reaction K(+)(in) = K(+)(out). Ethanol and carbon monoxide-bound heme increase channel activation. Heme inhibits channel activation. Potassium channel activated by both membrane depolarization or increase in cytosolic Ca(2+) that mediates export of K(+). It is also activated by the concentration of cytosolic Mg(2+). Its activation dampens the excitatory events that elevate the cytosolic Ca(2+) concentration and/or depolarize the cell membrane. It therefore contributes to repolarization of the membrane potential. Plays a key role in controlling excitability in a number of systems, such as regulation of the contraction of smooth muscle, the tuning of hair cells in the cochlea, regulation of transmitter release, and innate immunity. In smooth muscles, its activation by high level of Ca(2+), caused by ryanodine receptors in the sarcoplasmic reticulum, regulates the membrane potential. In cochlea cells, its number and kinetic properties partly determine the characteristic frequency of each hair cell and thereby helps to establish a tonotopic map. Kinetics of KCNMA1 channels are determined by alternative splicing, phosphorylation status and its combination with modulating beta subunits. Highly sensitive to both iberiotoxin (IbTx) and charybdotoxin (CTX). Its function is as follows. Potassium channel activated by both membrane depolarization or increase in cytosolic Ca(2+) that mediates export of K(+). This is Calcium-activated potassium channel subunit alpha-1 (KCNMA1) from Oryctolagus cuniculus (Rabbit).